The following is an 86-amino-acid chain: Anti-adapter protein IraP (86 aa).

Residues 1 to 42 (MKNLIAELLVKLAQKEEESKELVAQVEALEIVVTALLRQMAQ) are a coiled coil.

This sequence belongs to the IraP family. In terms of assembly, interacts with RssB.

The protein resides in the cytoplasm. Its function is as follows. Inhibits RpoS proteolysis by regulating RssB activity, thereby increasing the stability of the sigma stress factor RpoS especially during phosphate starvation, but also in stationary phase and during nitrogen starvation. Its effect on RpoS stability is due to its interaction with RssB, which probably blocks the interaction of RssB with RpoS, and the consequent delivery of the RssB-RpoS complex to the ClpXP protein degradation pathway. The polypeptide is Anti-adapter protein IraP (Enterobacter sp. (strain 638)).